Consider the following 267-residue polypeptide: Probable 3-methyl-2-oxobutanoate hydroxymethyltransferase (267 aa).

The protein belongs to the PanB family.

The enzyme catalyses 3-methyl-2-oxobutanoate + (6R)-5,10-methylene-5,6,7,8-tetrahydrofolate + H2O = 2-dehydropantoate + (6S)-5,6,7,8-tetrahydrofolate. The protein operates within cofactor biosynthesis; (R)-pantothenate biosynthesis; (R)-pantoate from 3-methyl-2-oxobutanoate: step 1/2. This Schizosaccharomyces pombe (strain 972 / ATCC 24843) (Fission yeast) protein is Probable 3-methyl-2-oxobutanoate hydroxymethyltransferase.